We begin with the raw amino-acid sequence, 119 residues long: Type II secretion system protein I (119 aa).

Positions 1-5 are cleaved as a propeptide — leader sequence; that stretch reads MNARG. Met6 bears the N-methylmethionine mark. The helical transmembrane segment at 6–26 threads the bilayer; sequence MTLLEVMVALAVFAIAGLAVM.

It belongs to the GSP I family. As to quaternary structure, type II secretion is composed of four main components: the outer membrane complex, the inner membrane complex, the cytoplasmic secretion ATPase and the periplasm-spanning pseudopilus. Interacts with core component ExeG. In terms of processing, cleaved by prepilin peptidase. Methylated by prepilin peptidase at the amino group of the N-terminal methionine once the leader sequence is cleaved by prepilin peptidase.

Its subcellular location is the cell inner membrane. Functionally, component of the type II secretion system required for the energy-dependent secretion of extracellular factors such as proteases and toxins from the periplasm. Part of the pseudopilus tip complex that is critical for the recognition and binding of secretion substrates. This Aeromonas hydrophila protein is Type II secretion system protein I (exeI).